Here is a 100-residue protein sequence, read N- to C-terminus: UPF0125 protein CV_3462 (100 aa).

This sequence belongs to the UPF0125 (RnfH) family.

The protein is UPF0125 protein CV_3462 of Chromobacterium violaceum (strain ATCC 12472 / DSM 30191 / JCM 1249 / CCUG 213 / NBRC 12614 / NCIMB 9131 / NCTC 9757 / MK).